A 474-amino-acid chain; its full sequence is Probable glycine dehydrogenase (decarboxylating) subunit 2 (474 aa).

At lysine 262 the chain carries N6-(pyridoxal phosphate)lysine.

This sequence belongs to the GcvP family. C-terminal subunit subfamily. The glycine cleavage system is composed of four proteins: P, T, L and H. In this organism, the P 'protein' is a heterodimer of two subunits. Requires pyridoxal 5'-phosphate as cofactor.

The enzyme catalyses N(6)-[(R)-lipoyl]-L-lysyl-[glycine-cleavage complex H protein] + glycine + H(+) = N(6)-[(R)-S(8)-aminomethyldihydrolipoyl]-L-lysyl-[glycine-cleavage complex H protein] + CO2. Functionally, the glycine cleavage system catalyzes the degradation of glycine. The P protein binds the alpha-amino group of glycine through its pyridoxal phosphate cofactor; CO(2) is released and the remaining methylamine moiety is then transferred to the lipoamide cofactor of the H protein. The polypeptide is Probable glycine dehydrogenase (decarboxylating) subunit 2 (Thermotoga petrophila (strain ATCC BAA-488 / DSM 13995 / JCM 10881 / RKU-1)).